The chain runs to 298 residues: GTPase Era (298 aa).

Residues 3-170 (KSGFVAILGR…IKLLTDNLEE (168 aa)) enclose the Era-type G domain. The segment at 11–18 (GRPNVGKS) is G1. 11 to 18 (GRPNVGKS) contributes to the GTP binding site. Positions 37–41 (QTTRN) are G2. Residues 58-61 (DTPG) are G3. GTP contacts are provided by residues 58 to 62 (DTPGI) and 120 to 123 (NKID). Residues 120-123 (NKID) form a G4 region. The interval 149–151 (ISA) is G5. Residues 201–279 (TQQEVPHSVA…YLETWVKVKK (79 aa)) form the KH type-2 domain.

It belongs to the TRAFAC class TrmE-Era-EngA-EngB-Septin-like GTPase superfamily. Era GTPase family. In terms of assembly, monomer.

The protein resides in the cytoplasm. It localises to the cell membrane. An essential GTPase that binds both GDP and GTP, with rapid nucleotide exchange. Plays a role in 16S rRNA processing and 30S ribosomal subunit biogenesis and possibly also in cell cycle regulation and energy metabolism. The protein is GTPase Era of Streptococcus pyogenes serotype M4 (strain MGAS10750).